A 374-amino-acid chain; its full sequence is Severin (374 aa).

Gelsolin-like repeat units follow at residues 58–109 (FTLE…DEYG), 180–220 (EGKT…KCSA), and 278–369 (EVIK…SFLK).

This sequence belongs to the villin/gelsolin family.

Severin blocks the ends of F-actin and causes the fragmentation and depolymerization of actin filaments. This severin binds stably with actin both in a Ca(2+) dependent and a Ca(2+) independent manner. This chain is Severin (AG8), found in Echinococcus granulosus (Hydatid tapeworm).